Consider the following 190-residue polypeptide: CASP-like protein 1E2 (190 aa).

The segment covering 1-12 has biased composition (low complexity); the sequence is MENEGKNNMNGM. The segment at 1-24 is disordered; that stretch reads MENEGKNNMNGMEMEKGKRESRSR. Residues 1–28 lie on the Cytoplasmic side of the membrane; it reads MENEGKNNMNGMEMEKGKRESRSRKGVE. The span at 13 to 24 shows a compositional bias: basic and acidic residues; that stretch reads EMEKGKRESRSR. The helical transmembrane segment at 29–49 threads the bilayer; the sequence is LTMRVLALVLTMAAATVLGVA. Topologically, residues 50–83 are extracellular; the sequence is KQTKVVSIKLIPALPPLDITTTAKASYLSAFVYN. A helical membrane pass occupies residues 84–104; the sequence is ISANAIACGYTAISIAILMIS. At 105–111 the chain is on the cytoplasmic side; the sequence is RGRRSKK. A helical transmembrane segment spans residues 112 to 132; sequence LLMAVLLGDLVMVALLFSGTG. Residues 133 to 163 are Extracellular-facing; it reads AASAIGLMGLQGNKHVMWNKVCGVFGKFCHR. Residues 164–184 form a helical membrane-spanning segment; it reads AAPSLPLTFLAAVVFMFLVVL. Topologically, residues 185-190 are cytoplasmic; it reads DAIKLP.

This sequence belongs to the Casparian strip membrane proteins (CASP) family. Homodimer and heterodimers.

The protein localises to the cell membrane. The sequence is that of CASP-like protein 1E2 from Arabidopsis lyrata subsp. lyrata (Lyre-leaved rock-cress).